We begin with the raw amino-acid sequence, 267 residues long: 2-keto-3-deoxy-L-rhamnonate aldolase (267 aa).

The active-site Proton acceptor is the His49. Gln151 contributes to the substrate binding site. Glu153 serves as a coordination point for Mg(2+). Ala178 and Asp179 together coordinate substrate. Asp179 contacts Mg(2+).

The protein belongs to the HpcH/HpaI aldolase family. KDR aldolase subfamily. As to quaternary structure, homohexamer. Mg(2+) is required as a cofactor.

The catalysed reaction is 2-dehydro-3-deoxy-L-rhamnonate = (S)-lactaldehyde + pyruvate. Its function is as follows. Catalyzes the reversible retro-aldol cleavage of 2-keto-3-deoxy-L-rhamnonate (KDR) to pyruvate and lactaldehyde. The protein is 2-keto-3-deoxy-L-rhamnonate aldolase of Shigella boydii serotype 4 (strain Sb227).